The chain runs to 503 residues: Maturase K (503 aa).

The protein belongs to the intron maturase 2 family. MatK subfamily.

The protein resides in the plastid. It is found in the chloroplast. In terms of biological role, usually encoded in the trnK tRNA gene intron. Probably assists in splicing its own and other chloroplast group II introns. This Panax ginseng (Korean ginseng) protein is Maturase K.